The following is a 64-amino-acid chain: Protein sigN173 (64 aa).

This Dictyostelium discoideum (Social amoeba) protein is Protein sigN173.